Consider the following 378-residue polypeptide: MATTHAQGHQPVLGNDTLREHYDYVGKLAGRLRDPPEGGTLITTILFLVTCSFIVLENLMVLIAIWKNNKFHNRMYFFIGNLALCDLLAGIAYKVNILMSGRKTFSLSPTVWFLREGSMFVALGASTCSLLAIAIERHLTMIKMRPYDANKKHRVFLLIGMCWLIAFSLGALPILGWNCLENFPDCSTILPLYSKKYIAFLISIFTAILVTIVILYARIYCLVKSSSRRVANHNSERSMALLRTVVIVVSVFIACWSPLFILFLIDVACRAKECSILFKSQWFIMLAVLNSAMNPVIYTLASKEMRRAFFRLVCGCLVKGKGTQASPMQPALDPSRSKSSSSNNSSHSPKVKEDLPRVATSSCIIDKNRSFQNGVLCK.

Residues Met-1 to Thr-44 lie on the Extracellular side of the membrane. Asn-15 carries an N-linked (GlcNAc...) asparagine glycan. Residues Ile-45 to Ile-65 traverse the membrane as a helical segment. The Cytoplasmic portion of the chain corresponds to Trp-66 to Arg-74. Residues Met-75 to Val-95 traverse the membrane as a helical segment. The Extracellular segment spans residues Asn-96–Arg-115. A helical membrane pass occupies residues Glu-116 to Glu-136. Over Arg-137–Arg-154 the chain is Cytoplasmic. The helical transmembrane segment at Val-155–Leu-175 threads the bilayer. Residues Gly-176–Lys-196 are Extracellular-facing. The chain crosses the membrane as a helical span at residues Tyr-197 to Ala-217. The Cytoplasmic portion of the chain corresponds to Arg-218–Thr-244. The chain crosses the membrane as a helical span at residues Val-245–Ile-265. Over Asp-266–Gln-281 the chain is Extracellular. The chain crosses the membrane as a helical span at residues Trp-282–Ser-302. Residues Lys-303 to Lys-378 lie on the Cytoplasmic side of the membrane. The segment at Thr-323–Asp-354 is disordered. Position 326 is a phosphoserine (Ser-326). Over residues Ser-337–Ser-348 the composition is skewed to low complexity.

It belongs to the G-protein coupled receptor 1 family. As to expression, most abundant in heart, lung, kidney and spleen; low but detectable in brain, thymus, muscle and testis; and nearly undetectable in liver, stomach, and intestine. Expressed in embryonic lung from embryonic day 14-18. Also abundantly detected in embryonic nasal cartilage, sphenoid bone, vena cava, Meckel's cartilage/incisor teeth, genital tubercle and bladder.

The protein localises to the cell membrane. Its function is as follows. Receptor for the lysosphingolipid sphingosine 1-phosphate (S1P). S1P is a bioactive lysophospholipid that elicits diverse physiological effect on most types of cells and tissues. This chain is Sphingosine 1-phosphate receptor 3 (S1pr3), found in Mus musculus (Mouse).